The sequence spans 601 residues: Glutamine--fructose-6-phosphate aminotransferase [isomerizing] (601 aa).

Catalysis depends on Cys-2, which acts as the Nucleophile; for GATase activity. Residues 2–214 (CGITGYIGTD…NGDIAHLTET (213 aa)) form the Glutamine amidotransferase type-2 domain. 2 consecutive SIS domains span residues 281–420 (STET…ARNA) and 453–591 (IGRE…IDKP). Lys-596 serves as the catalytic For Fru-6P isomerization activity.

As to quaternary structure, homodimer.

The protein localises to the cytoplasm. It catalyses the reaction D-fructose 6-phosphate + L-glutamine = D-glucosamine 6-phosphate + L-glutamate. Its function is as follows. Catalyzes the first step in hexosamine metabolism, converting fructose-6P into glucosamine-6P using glutamine as a nitrogen source. The polypeptide is Glutamine--fructose-6-phosphate aminotransferase [isomerizing] (Halobacterium salinarum (strain ATCC 700922 / JCM 11081 / NRC-1) (Halobacterium halobium)).